Here is a 106-residue protein sequence, read N- to C-terminus: Iron-sulfur cluster assembly protein CyaY (106 aa).

The protein belongs to the frataxin family.

In terms of biological role, involved in iron-sulfur (Fe-S) cluster assembly. May act as a regulator of Fe-S biogenesis. The sequence is that of Iron-sulfur cluster assembly protein CyaY from Salmonella typhimurium (strain LT2 / SGSC1412 / ATCC 700720).